The chain runs to 163 residues: 3-hydroxyacyl-[acyl-carrier-protein] dehydratase FabZ (163 aa).

H58 is a catalytic residue.

This sequence belongs to the thioester dehydratase family. FabZ subfamily.

The protein resides in the cytoplasm. The enzyme catalyses a (3R)-hydroxyacyl-[ACP] = a (2E)-enoyl-[ACP] + H2O. In terms of biological role, involved in unsaturated fatty acids biosynthesis. Catalyzes the dehydration of short chain beta-hydroxyacyl-ACPs and long chain saturated and unsaturated beta-hydroxyacyl-ACPs. This is 3-hydroxyacyl-[acyl-carrier-protein] dehydratase FabZ from Francisella philomiragia subsp. philomiragia (strain ATCC 25017 / CCUG 19701 / FSC 153 / O#319-036).